The following is a 634-amino-acid chain: Threonine--tRNA ligase (634 aa).

The TGS domain occupies 1–61 (MINIRFPDGS…NSNCELRLIT (61 aa)). The tract at residues 241-532 (DHRKIGKVLD…LIEHYAGNLP (292 aa)) is catalytic. Zn(2+) contacts are provided by cysteine 332, histidine 383, and histidine 509.

Belongs to the class-II aminoacyl-tRNA synthetase family. Homodimer. The cofactor is Zn(2+).

The protein localises to the cytoplasm. The catalysed reaction is tRNA(Thr) + L-threonine + ATP = L-threonyl-tRNA(Thr) + AMP + diphosphate + H(+). Catalyzes the attachment of threonine to tRNA(Thr) in a two-step reaction: L-threonine is first activated by ATP to form Thr-AMP and then transferred to the acceptor end of tRNA(Thr). Also edits incorrectly charged L-seryl-tRNA(Thr). This is Threonine--tRNA ligase from Francisella tularensis subsp. holarctica (strain OSU18).